Reading from the N-terminus, the 43-residue chain is Methionine aminopeptidase (43 aa).

The protein belongs to the peptidase M24A family. Methionine aminopeptidase type 1 subfamily. As to quaternary structure, monomer. It depends on Co(2+) as a cofactor. Requires Zn(2+) as cofactor. Mn(2+) is required as a cofactor. The cofactor is Fe(2+).

The enzyme catalyses Release of N-terminal amino acids, preferentially methionine, from peptides and arylamides.. In terms of biological role, removes the N-terminal methionine from nascent proteins. The N-terminal methionine is often cleaved when the second residue in the primary sequence is small and uncharged (Met-Ala-, Cys, Gly, Pro, Ser, Thr, or Val). Requires deformylation of the N(alpha)-formylated initiator methionine before it can be hydrolyzed. The polypeptide is Methionine aminopeptidase (map) (Klebsiella oxytoca).